The sequence spans 299 residues: Protease HtpX homolog (299 aa).

Transmembrane regions (helical) follow at residues 16 to 36 and 38 to 58; these read VMAAFVILLAVIGLAVGYVFF and SAIAGLLVALIAAVFYMVLMI. Position 144 (His-144) interacts with Zn(2+). Residue Glu-145 is part of the active site. Zn(2+) is bound at residue His-148. 2 helical membrane-spanning segments follow: residues 159–179 and 198–218; these read IALALTAAISLLVNWGMNAFW and VLLMILAIVVIILAPLAASLV. Glu-227 lines the Zn(2+) pocket.

It belongs to the peptidase M48B family. Zn(2+) is required as a cofactor.

It localises to the cell membrane. This chain is Protease HtpX homolog, found in Lactiplantibacillus plantarum (strain ATCC BAA-793 / NCIMB 8826 / WCFS1) (Lactobacillus plantarum).